The following is a 946-amino-acid chain: MIGALARKLFGSANDRRVKGYQTRVAAINALEPEVAALSDEALRARTAEFRAELAAGKTLDDLLVPAFATVREAAKRTLGQRHFDVQLIGGMVLHEGDIAEMKTGEGKTLVATLAVYLNALAGKGVHVVTVNDYLAKRDSGWMGQIYGFLGMTTGVIVHGLDDAQRQAAYACDITYGTNNEYGFDYLRDNMKYRLEDMVQRGHNFAIVDEVDSILIDEARTPLIISGPLDDRSDFYNTIDTFIPRLDKSDYDVDEKQRTVTLTEAGMEKIETLLRDAGQLRGESLYDVENVSVVHHVNQALRAHALFQRDKDYIVRNDEVVIIDEFTGRMMQGRRYSEGLHQALEAKEHVTVQPENQTLASITFQNYFRMYDKLAGMTGTASTEADEFFDIYKLEVVEIPTNLPIARLDEDDEVYRTQQEKYAAILAEVERANKRMQPVLVGTASIEKSEVLAEYLKKNGYKQIDFTDPKGMDKLYAAARAGKPAKLFAVLNARFHEQEAYIVAEAGVPGAITIATNMAGRGTDIKLGGSLEMRIQQEAAHITDEAERAAKITEIKADIERFRDIVLKAEDEIEIEPAKGNKPAKTAKRPGGLYIIGSERHESRRIDNQLRGRSGRQGDPGRSKFFLSLEDDLMRIFGSDKLDTMLTRLGLKEGEAIIHPWINKALEKAQQKVEARNFDIRKNLLKFDDVQNDQRKVIFDQRIELMKEDSVAETVTDMRHTYIEDLVAKYVPEHAYAEQWDVAGLKAEVERVVGLDIPVDEWAKEEGIADEELITRLERVFDEHMAAKVGQWGSDVMRYAEKSILLQTLDHLWREHLVMLDHLRQVIGLRGYGQRDPLQEYKSEAFNLFQEMSSHLREAVTAQLMRVEIIPPDQPQELPPMEVHKMDPDTGQDEMALANVTLAPAQTTDKADRDPNKPETWGKVGRNEDCPCGSGKKYKHCHGRYA.

ATP is bound by residues Gln-87, 105 to 109 (GEGKT), and Asp-524. The tract at residues 904-933 (PAQTTDKADRDPNKPETWGKVGRNEDCPCG) is disordered. Zn(2+)-binding residues include Cys-930, Cys-932, Cys-941, and His-942.

It belongs to the SecA family. In terms of assembly, monomer and homodimer. Part of the essential Sec protein translocation apparatus which comprises SecA, SecYEG and auxiliary proteins SecDF-YajC and YidC. Requires Zn(2+) as cofactor.

It is found in the cell inner membrane. The protein resides in the cytoplasm. It carries out the reaction ATP + H2O + cellular proteinSide 1 = ADP + phosphate + cellular proteinSide 2.. In terms of biological role, part of the Sec protein translocase complex. Interacts with the SecYEG preprotein conducting channel. Has a central role in coupling the hydrolysis of ATP to the transfer of proteins into and across the cell membrane, serving both as a receptor for the preprotein-SecB complex and as an ATP-driven molecular motor driving the stepwise translocation of polypeptide chains across the membrane. The polypeptide is Protein translocase subunit SecA (Rhodopseudomonas palustris (strain TIE-1)).